Reading from the N-terminus, the 251-residue chain is MATQRISDEPAYVLHRHDWSESSLILEVFTRHHGRIALVAKGVKRPSSSFRPILLPLQLLHVAFGGDAEIRILKAAEWQGGHVMPTGDALMSGLYLNELLLTLLARDDPHTRLFDVYTQVVQVIASGHGEVLQSALRAFELLLLREIGLLPLLDAQTMTLLALDPESRYSLVPEGGLRQTNDADRASLSGAQWVALQQSLVDSAPFTATLRACSEVMTQLKPQLRALLNYHCGVQTLRTRQMMIDLQSLSL.

It belongs to the RecO family.

Involved in DNA repair and RecF pathway recombination. This is DNA repair protein RecO from Albidiferax ferrireducens (strain ATCC BAA-621 / DSM 15236 / T118) (Rhodoferax ferrireducens).